The primary structure comprises 175 residues: Alpha-crystallin B chain (175 aa).

Met1 is modified (N-acetylmethionine). Phosphoserine occurs at positions 19, 45, and 59. Residues 56 to 164 (RAPSWIDTGL…PERTIPITRE (109 aa)) enclose the sHSP domain. His83 lines the Zn(2+) pocket. The residue at position 92 (Lys92) is an N6-acetyllysine. 4 residues coordinate Zn(2+): His104, Glu106, His111, and His119. The interval 145–175 (VNGPRKQASGPERTIPITREEKPAVTAAPKK) is disordered. Lys166 carries the N6-acetyllysine modification. O-linked (GlcNAc) threonine glycosylation is present at Thr170.

It belongs to the small heat shock protein (HSP20) family. As to quaternary structure, heteromer composed of three CRYAA and one CRYAB subunits. Aggregates with homologous proteins, including the small heat shock protein HSPB1, to form large heteromeric complexes. Inter-subunit bridging via zinc ions enhances stability, which is crucial as there is no protein turn over in the lens. Interacts with HSPBAP1 and TTN/titin. Interacts with TMEM109; in the cellular response to DNA damage. Interacts with DES; binds rapidly during early stages of DES filament assembly and a reduced binding seen in the later stages. Interacts with TMED10; the interaction mediates the translocation from the cytoplasm into the ERGIC (endoplasmic reticulum-Golgi intermediate compartment) and thereby secretion. Interacts with ATP6V1A and with MTOR, forming a ternary complex. As to expression, lens as well as other tissues.

It localises to the cytoplasm. It is found in the nucleus. Its subcellular location is the secreted. The protein resides in the lysosome. Functionally, may contribute to the transparency and refractive index of the lens. Has chaperone-like activity, preventing aggregation of various proteins under a wide range of stress conditions. In lens epithelial cells, stabilizes the ATP6V1A protein, preventing its degradation by the proteasome. In Mesocricetus auratus (Golden hamster), this protein is Alpha-crystallin B chain (CRYAB).